Reading from the N-terminus, the 427-residue chain is Homeobox protein knotted-1-like 3 (427 aa).

2 disordered regions span residues 19-49 (QTHHQHQQYQSDQPDPNSKPPEPHHSFQPAP) and 272-291 (TGVSPGEGTSATMSDDEDDQ). Over residues 272 to 284 (TGVSPGEGTSATM) the composition is skewed to polar residues. The ELK domain occupies 330 to 350 (ELKHELKQGYKEKIVDIREEI). A DNA-binding region (homeobox; TALE-type) is located at residues 351–414 (LRKRRAGKLP…NQRKRNWHSN (64 aa)).

It belongs to the TALE/KNOX homeobox family. In terms of tissue distribution, maximally expressed in sepals, petals and fully expanded leaves. Also expressed in other flower organs and in developing leaves. Low level expression in stem internodes.

It localises to the nucleus. This Malus domestica (Apple) protein is Homeobox protein knotted-1-like 3.